A 492-amino-acid chain; its full sequence is UDP-N-acetylmuramoyl-L-alanyl-D-glutamate--2,6-diaminopimelate ligase (492 aa).

Residue Ser-30 coordinates UDP-N-acetyl-alpha-D-muramoyl-L-alanyl-D-glutamate. 114–120 (GTNGKTS) contacts ATP. UDP-N-acetyl-alpha-D-muramoyl-L-alanyl-D-glutamate-binding positions include 156–157 (TT), Ser-183, Gln-189, and Arg-191. Residue Lys-223 is modified to N6-carboxylysine. Meso-2,6-diaminopimelate is bound by residues Arg-389, 413 to 416 (DNPR), Gly-462, and Glu-466. The Meso-diaminopimelate recognition motif motif lies at 413 to 416 (DNPR).

Belongs to the MurCDEF family. MurE subfamily. Mg(2+) serves as cofactor. Carboxylation is probably crucial for Mg(2+) binding and, consequently, for the gamma-phosphate positioning of ATP.

It localises to the cytoplasm. It carries out the reaction UDP-N-acetyl-alpha-D-muramoyl-L-alanyl-D-glutamate + meso-2,6-diaminopimelate + ATP = UDP-N-acetyl-alpha-D-muramoyl-L-alanyl-gamma-D-glutamyl-meso-2,6-diaminopimelate + ADP + phosphate + H(+). Its pathway is cell wall biogenesis; peptidoglycan biosynthesis. In terms of biological role, catalyzes the addition of meso-diaminopimelic acid to the nucleotide precursor UDP-N-acetylmuramoyl-L-alanyl-D-glutamate (UMAG) in the biosynthesis of bacterial cell-wall peptidoglycan. The chain is UDP-N-acetylmuramoyl-L-alanyl-D-glutamate--2,6-diaminopimelate ligase from Neisseria meningitidis serogroup B (strain ATCC BAA-335 / MC58).